Here is a 723-residue protein sequence, read N- to C-terminus: Catalase-peroxidase (723 aa).

An N-terminal signal peptide occupies residues 1–29; that stretch reads MDGNDLVENKCPVMHGGITVAGHSNTAWW. Positions 97–225 form a cross-link, tryptophyl-tyrosyl-methioninium (Trp-Tyr) (with M-251); the sequence is WHSAGSYRLA…LAAVQMGLIY (129 aa). Residue histidine 98 is the Proton acceptor of the active site. The tryptophyl-tyrosyl-methioninium (Tyr-Met) (with W-97) cross-link spans 225–251; that stretch reads YVNPEGVNGKSDPLKSAAQVRETFARM. A heme b-binding site is contributed by histidine 266.

The protein belongs to the peroxidase family. Peroxidase/catalase subfamily. In terms of assembly, homodimer or homotetramer. Heme b is required as a cofactor. Formation of the three residue Trp-Tyr-Met cross-link is important for the catalase, but not the peroxidase activity of the enzyme.

The catalysed reaction is H2O2 + AH2 = A + 2 H2O. It carries out the reaction 2 H2O2 = O2 + 2 H2O. Functionally, bifunctional enzyme with both catalase and broad-spectrum peroxidase activity. This is Catalase-peroxidase from Hyphomonas neptunium (strain ATCC 15444).